Consider the following 304-residue polypeptide: tRNA-uridine aminocarboxypropyltransferase 1 (304 aa).

N-acetylserine is present on Ser-2. The short motif at 206-209 (DSTW) is the DXTW element.

It belongs to the TDD superfamily. DTWD1 family.

It is found in the nucleus. It catalyses the reaction a uridine in tRNA + S-adenosyl-L-methionine = a 3-[(3S)-3-amino-3-carboxypropyl]uridine in tRNA + S-methyl-5'-thioadenosine + H(+). Its function is as follows. Catalyzes the formation of 3-(3-amino-3-carboxypropyl)uridine (acp3U) at position 20 in the D-loop of several cytoplasmic tRNAs (acp3U(20)). This Homo sapiens (Human) protein is tRNA-uridine aminocarboxypropyltransferase 1.